Consider the following 229-residue polypeptide: Cytochrome c oxidase subunit 2 (229 aa).

Over 1–26 (MSTWANLGLQDSASPLMEQLIFFHDH) the chain is Mitochondrial intermembrane. The chain crosses the membrane as a helical span at residues 27–48 (ALLILVMITVLVGYLMFMLFFN). At 49–62 (SYVNRFLLHGQLIE) the chain is on the mitochondrial matrix side. A helical membrane pass occupies residues 63-82 (MIWTILPAIILLFIAMPSLR). At 83-229 (LLYLLDEINE…IKWISNSVNS (147 aa)) the chain is on the mitochondrial intermembrane side. Residues H161, C196, E198, C200, H204, and M207 each contribute to the Cu cation site. A Mg(2+)-binding site is contributed by E198.

Belongs to the cytochrome c oxidase subunit 2 family. As to quaternary structure, component of the cytochrome c oxidase (complex IV, CIV), a multisubunit enzyme composed of a catalytic core of 3 subunits and several supernumerary subunits. The complex exists as a monomer or a dimer and forms supercomplexes (SCs) in the inner mitochondrial membrane with ubiquinol-cytochrome c oxidoreductase (cytochrome b-c1 complex, complex III, CIII). Cu cation is required as a cofactor.

The protein resides in the mitochondrion inner membrane. The catalysed reaction is 4 Fe(II)-[cytochrome c] + O2 + 8 H(+)(in) = 4 Fe(III)-[cytochrome c] + 2 H2O + 4 H(+)(out). Functionally, component of the cytochrome c oxidase, the last enzyme in the mitochondrial electron transport chain which drives oxidative phosphorylation. The respiratory chain contains 3 multisubunit complexes succinate dehydrogenase (complex II, CII), ubiquinol-cytochrome c oxidoreductase (cytochrome b-c1 complex, complex III, CIII) and cytochrome c oxidase (complex IV, CIV), that cooperate to transfer electrons derived from NADH and succinate to molecular oxygen, creating an electrochemical gradient over the inner membrane that drives transmembrane transport and the ATP synthase. Cytochrome c oxidase is the component of the respiratory chain that catalyzes the reduction of oxygen to water. Electrons originating from reduced cytochrome c in the intermembrane space (IMS) are transferred via the dinuclear copper A center (CU(A)) of subunit 2 and heme A of subunit 1 to the active site in subunit 1, a binuclear center (BNC) formed by heme A3 and copper B (CU(B)). The BNC reduces molecular oxygen to 2 water molecules using 4 electrons from cytochrome c in the IMS and 4 protons from the mitochondrial matrix. This is Cytochrome c oxidase subunit 2 (mt:CoII) from Drosophila affinis (Fruit fly).